Here is a 359-residue protein sequence, read N- to C-terminus: UDP-N-acetylglucosamine--N-acetylmuramyl-(pentapeptide) pyrophosphoryl-undecaprenol N-acetylglucosamine transferase (359 aa).

Residues 12–14 (TGG), Asn124, Arg163, Ser191, Ile245, 264–269 (ALTVAE), and Gln290 each bind UDP-N-acetyl-alpha-D-glucosamine.

Belongs to the glycosyltransferase 28 family. MurG subfamily.

The protein resides in the cell inner membrane. It carries out the reaction di-trans,octa-cis-undecaprenyl diphospho-N-acetyl-alpha-D-muramoyl-L-alanyl-D-glutamyl-meso-2,6-diaminopimeloyl-D-alanyl-D-alanine + UDP-N-acetyl-alpha-D-glucosamine = di-trans,octa-cis-undecaprenyl diphospho-[N-acetyl-alpha-D-glucosaminyl-(1-&gt;4)]-N-acetyl-alpha-D-muramoyl-L-alanyl-D-glutamyl-meso-2,6-diaminopimeloyl-D-alanyl-D-alanine + UDP + H(+). Its pathway is cell wall biogenesis; peptidoglycan biosynthesis. Its function is as follows. Cell wall formation. Catalyzes the transfer of a GlcNAc subunit on undecaprenyl-pyrophosphoryl-MurNAc-pentapeptide (lipid intermediate I) to form undecaprenyl-pyrophosphoryl-MurNAc-(pentapeptide)GlcNAc (lipid intermediate II). This is UDP-N-acetylglucosamine--N-acetylmuramyl-(pentapeptide) pyrophosphoryl-undecaprenol N-acetylglucosamine transferase from Nitrosococcus oceani (strain ATCC 19707 / BCRC 17464 / JCM 30415 / NCIMB 11848 / C-107).